The following is a 194-amino-acid chain: Imidazoleglycerol-phosphate dehydratase (194 aa).

Belongs to the imidazoleglycerol-phosphate dehydratase family.

The protein localises to the cytoplasm. It carries out the reaction D-erythro-1-(imidazol-4-yl)glycerol 3-phosphate = 3-(imidazol-4-yl)-2-oxopropyl phosphate + H2O. Its pathway is amino-acid biosynthesis; L-histidine biosynthesis; L-histidine from 5-phospho-alpha-D-ribose 1-diphosphate: step 6/9. In Sulfurisphaera tokodaii (strain DSM 16993 / JCM 10545 / NBRC 100140 / 7) (Sulfolobus tokodaii), this protein is Imidazoleglycerol-phosphate dehydratase.